We begin with the raw amino-acid sequence, 446 residues long: Glycogen synthase (446 aa).

An ADP-alpha-D-glucose-binding site is contributed by Arg-15.

Belongs to the glycosyltransferase 1 family. Bacterial/plant glycogen synthase subfamily.

The enzyme catalyses [(1-&gt;4)-alpha-D-glucosyl](n) + ADP-alpha-D-glucose = [(1-&gt;4)-alpha-D-glucosyl](n+1) + ADP + H(+). The protein operates within glycan biosynthesis; glycogen biosynthesis. Its function is as follows. Synthesizes alpha-1,4-glucan chains using ADP-glucose. This chain is Glycogen synthase, found in Deinococcus deserti (strain DSM 17065 / CIP 109153 / LMG 22923 / VCD115).